We begin with the raw amino-acid sequence, 212 residues long: Adenylate kinase (212 aa).

ATP is bound at residue 10–15 (GAGKGT). The tract at residues 30–59 (STGDILREAMAQETELGQKAKSYIDAGELV) is NMP. Residues Thr-31, Arg-36, 57-59 (ELV), 84-87 (GYPR), and Gln-91 contribute to the AMP site. The tract at residues 125–158 (RRRVHEETGETYHLDHDPPPEDVDPDLIVQRSDD) is LID. Residues Arg-126 and 135-136 (TY) contribute to the ATP site. AMP-binding residues include Arg-155 and Arg-166. Gly-194 is an ATP binding site.

It belongs to the adenylate kinase family. As to quaternary structure, monomer.

The protein resides in the cytoplasm. The enzyme catalyses AMP + ATP = 2 ADP. Its pathway is purine metabolism; AMP biosynthesis via salvage pathway; AMP from ADP: step 1/1. Catalyzes the reversible transfer of the terminal phosphate group between ATP and AMP. Plays an important role in cellular energy homeostasis and in adenine nucleotide metabolism. The polypeptide is Adenylate kinase (Salinibacter ruber (strain DSM 13855 / M31)).